A 435-amino-acid polypeptide reads, in one-letter code: Cytokine-dependent hematopoietic cell linker (435 aa).

Residues Y69 and Y96 each carry the phosphotyrosine; by LYN modification. The interval 155–303 (KINKTPLPPP…PDPTKPDEKD (149 aa)) is disordered. Residues 160-165 (PLPPPR) form a mediates interaction with PLCG1; essential for BCR signaling; involved in restoration of BCR-induced calcium response and ERK2 and JNK2 activation in BLNK-deficient cells expressing LAT region. The mediates interaction with LAT, GRB2, and FGR; involved in translocation to the glycolipid-enriched microdomain and restoration of BCR-induced calcium response in BLNK-deficient DT40 cells expressing LAT stretch occupies residues 178–182 (PPAPP). Polar residues predominate over residues 226–249 (PESSCPSSNQNTQKSPPAIASSSY). The segment covering 290-303 (NSEKPDPTKPDEKD) has biased composition (basic and acidic residues). The 110-residue stretch at 309–418 (WYIGEYSRQA…RKQCYLTQPL (110 aa)) folds into the SH2 domain.

When phosphorylated, interacts with PLCG1, PLCG2, GRB2, VAV and LAT. Associated with a tyrosine-phosphorylated polypeptide (p92) in response to immunoreceptor stimulation. Interacts with LBR and AGO2. Interacts with FGR. Part of a complex consisting of CLNK, SKAP1 and FYB1. Interacts (via SH2 domain) with FYB1; this interaction allows SKAP1 and FYB1 to promote tyrosine phosphorylation of CLNK by LYN. Interacts (via SH2 domain) with MAP4K1. Tyrosine-phosphorylated upon BCR cross-linking. Tyrosine phosphorylation at both Tyr-69 and Tyr-96 are required for BCR-induced calcium response and are essential to restore PLCG2-mediated signaling in BLNK-deficient DT40 cells, but this phosphorylation is dispensable in cells expressing LAT. Interacts with the SH2 domain of PLCG1 via phosphorylated Tyr-96. Tyrosine phosphorylation is increased when complexed with SKAP1 and FYB1. Expressed in T-cells, mast cells, natural killer and natural killer T cells (at protein level). Expressed in cytokine-stimulated hemopoietic cells.

It localises to the cytoplasm. In terms of biological role, an adapter protein which plays a role in the regulation of immunoreceptor signaling, including PLC-gamma-mediated B-cell antigen receptor (BCR) signaling and FC-epsilon R1-mediated mast cell degranulation. Together with FGR, it acts as a negative regulator of natural killer cell-activating receptors and inhibits interferon-gamma production. Acts as a positive regulator of both T-cell receptor and natural killer T (NKT) cell receptor signaling in CD4-positive NKT cells. Together with MAP4K1, it enhances CD3-triggered activation of T-cells and subsequent IL2 production. May be involved in tumor necrosis factor induced cell death by promoting reactive oxidative species generation, and MLKL oligomerization, ultimately leading to necrosis. Involved in phosphorylation of LAT. May be involved in high affinity immunoglobulin epsilon receptor signaling in mast cells. In Mus musculus (Mouse), this protein is Cytokine-dependent hematopoietic cell linker (Clnk).